The chain runs to 751 residues: Photosystem I P700 chlorophyll a apoprotein A1 (751 aa).

The next 8 helical transmembrane spans lie at 73–96 (VFSAHFGQLGIIFIWLSGMYFHGA), 159–182 (LYTTAIGGLVMAAAMFFAGWFHYH), 198–222 (LNHHLAGLLGLGSLAWAGHQIHVSL), 294–312 (TVHHHLAIAVLFLVAGHQY), 349–372 (WHAQLAINLALFGSLSIIVSHHMY), 388–414 (LSLFTHHMWIGGFCIVGAGAHAGIFMV), 436–458 (AMISHLNWVCIFLGFHSFGLYIH), and 533–551 (FMVHHIHAFTIHVTVLILL). Residues cysteine 575 and cysteine 584 each contribute to the [4Fe-4S] cluster site. The next 2 membrane-spanning stretches (helical) occupy residues 591 to 612 (HVFLGLFWMYNSISIVIFHFSW) and 665 to 687 (LSAYGLIFLGAHFVWAFSLMFLF). Histidine 676 contacts chlorophyll a'. Methionine 684 and tyrosine 692 together coordinate chlorophyll a. Tryptophan 693 is a phylloquinone binding site. Residues 725–745 (AVGVAHYLLGGIATTWSFFLA) traverse the membrane as a helical segment.

The protein belongs to the PsaA/PsaB family. In terms of assembly, the PsaA/B heterodimer binds the P700 chlorophyll special pair and subsequent electron acceptors. PSI consists of a core antenna complex that captures photons, and an electron transfer chain that converts photonic excitation into a charge separation. The eukaryotic PSI reaction center is composed of at least 11 subunits. The cofactor is P700 is a chlorophyll a/chlorophyll a' dimer, A0 is one or more chlorophyll a, A1 is one or both phylloquinones and FX is a shared 4Fe-4S iron-sulfur center..

It is found in the plastid. The protein resides in the chloroplast thylakoid membrane. It carries out the reaction reduced [plastocyanin] + hnu + oxidized [2Fe-2S]-[ferredoxin] = oxidized [plastocyanin] + reduced [2Fe-2S]-[ferredoxin]. In terms of biological role, psaA and PsaB bind P700, the primary electron donor of photosystem I (PSI), as well as the electron acceptors A0, A1 and FX. PSI is a plastocyanin/cytochrome c6-ferredoxin oxidoreductase, converting photonic excitation into a charge separation, which transfers an electron from the donor P700 chlorophyll pair to the spectroscopically characterized acceptors A0, A1, FX, FA and FB in turn. Oxidized P700 is reduced on the lumenal side of the thylakoid membrane by plastocyanin or cytochrome c6. The protein is Photosystem I P700 chlorophyll a apoprotein A1 of Chlorella vulgaris (Green alga).